The primary structure comprises 331 residues: MTSPHFSSYDEGPLDVSMAATNLENQLHSAQKNLLFLQREHASTLKGLHSEIRRLQQHCTDLTYELTVKSSEQTGDGTSKSSELKKRCEELEAQLKVKENENAELLKELEQKNAMITVLENTIKEREKKYLEELKAKSHKLTLLSSELEQRASTIAYLTSQLHAAKKKLMSSSGTSDASPSGSPVLASYKPAPPKDKLPETPRRRMKKSLSAPLHPEFEEVYRFGAESRKLLLREPVDAMPDPTPFLLARESAEVHLIKERPLVIPPIASDRSGEQHSPAREKPHKAHVGVAHRIHHATPPQAQPEVKTLAVDQVNGGKVVRKHSGTDRTV.

Coiled-coil stretches lie at residues 18–44 and 76–152; these read MAAT…HAST and DGTS…EQRA. The segment covering 171–184 has biased composition (low complexity); the sequence is SSSGTSDASPSGSP. The segment at 171-212 is disordered; that stretch reads SSSGTSDASPSGSPVLASYKPAPPKDKLPETPRRRMKKSLSA. Basic and acidic residues predominate over residues 193-203; the sequence is PPKDKLPETPR. Ser-209 carries the phosphoserine modification.

Interacts with CEP164. As to quaternary structure, (Microbial infection) Interacts with ebolavirus protein NP; this interaction sequesters NP in the cytoplasm. Post-translationally, phosphorylated at Ser-209 by TTBK2.

Its subcellular location is the cytoplasm. It is found in the cytoskeleton. The protein localises to the microtubule organizing center. The protein resides in the centrosome. It localises to the centriole. Interferon-stimulated protein that plays a role in innate immunity. Strongly inhibits ebolavirus transcription and replication. Forms a complex with viral RNA-bound nucleocapsid NP and thereby prevents the transport of NP to the cell surface. In Homo sapiens (Human), this protein is Coiled-coil domain-containing protein 92 (CCDC92).